We begin with the raw amino-acid sequence, 251 residues long: Ubiquinone/menaquinone biosynthesis C-methyltransferase UbiE (251 aa).

Residues Thr-74, Asp-95, 123 to 124 (NA), and Ser-140 contribute to the S-adenosyl-L-methionine site.

The protein belongs to the class I-like SAM-binding methyltransferase superfamily. MenG/UbiE family.

The enzyme catalyses a 2-demethylmenaquinol + S-adenosyl-L-methionine = a menaquinol + S-adenosyl-L-homocysteine + H(+). It catalyses the reaction a 2-methoxy-6-(all-trans-polyprenyl)benzene-1,4-diol + S-adenosyl-L-methionine = a 5-methoxy-2-methyl-3-(all-trans-polyprenyl)benzene-1,4-diol + S-adenosyl-L-homocysteine + H(+). It participates in quinol/quinone metabolism; menaquinone biosynthesis; menaquinol from 1,4-dihydroxy-2-naphthoate: step 2/2. The protein operates within cofactor biosynthesis; ubiquinone biosynthesis. In terms of biological role, methyltransferase required for the conversion of demethylmenaquinol (DMKH2) to menaquinol (MKH2) and the conversion of 2-polyprenyl-6-methoxy-1,4-benzoquinol (DDMQH2) to 2-polyprenyl-3-methyl-6-methoxy-1,4-benzoquinol (DMQH2). This Klebsiella pneumoniae subsp. pneumoniae (strain ATCC 700721 / MGH 78578) protein is Ubiquinone/menaquinone biosynthesis C-methyltransferase UbiE.